The primary structure comprises 553 residues: Putative transport protein AHA_3492 (553 aa).

5 consecutive transmembrane segments (helical) span residues isoleucine 4–tryptophan 24, valine 29–leucine 49, phenylalanine 65–serine 85, glycine 95–phenylalanine 115, and methionine 158–isoleucine 178. RCK C-terminal domains are found at residues alanine 191–glutamate 276 and glutamate 279–asparagine 361. 6 helical membrane passes run methionine 371–leucine 391, alanine 403–phenylalanine 425, isoleucine 439–isoleucine 459, alanine 465–alanine 485, tyrosine 493–alanine 513, and leucine 533–alanine 553.

This sequence belongs to the AAE transporter (TC 2.A.81) family. YidE subfamily.

It is found in the cell membrane. In Aeromonas hydrophila subsp. hydrophila (strain ATCC 7966 / DSM 30187 / BCRC 13018 / CCUG 14551 / JCM 1027 / KCTC 2358 / NCIMB 9240 / NCTC 8049), this protein is Putative transport protein AHA_3492.